Here is a 276-residue protein sequence, read N- to C-terminus: Undecaprenyl-diphosphatase (276 aa).

Transmembrane regions (helical) follow at residues Met1 to Val21, Ala39 to Phe59, Tyr84 to Phe104, Leu115 to Tyr135, Phe188 to Ala208, Gln222 to Leu242, and Phe253 to Val273.

This sequence belongs to the UppP family.

It localises to the cell membrane. It carries out the reaction di-trans,octa-cis-undecaprenyl diphosphate + H2O = di-trans,octa-cis-undecaprenyl phosphate + phosphate + H(+). Its function is as follows. Catalyzes the dephosphorylation of undecaprenyl diphosphate (UPP). Confers resistance to bacitracin. This is Undecaprenyl-diphosphatase from Mycolicibacterium vanbaalenii (strain DSM 7251 / JCM 13017 / BCRC 16820 / KCTC 9966 / NRRL B-24157 / PYR-1) (Mycobacterium vanbaalenii).